The following is a 171-amino-acid chain: ATP synthase subunit b (171 aa).

A helical transmembrane segment spans residues 2–22 (FLVKMVLGFLILLSPLCATGL).

The protein belongs to the ATPase B chain family. F-type ATPases have 2 components, F(1) - the catalytic core - and F(0) - the membrane proton channel. F(1) has five subunits: alpha(3), beta(3), gamma(1), delta(1), epsilon(1). F(0) has three main subunits: a(1), b(2) and c(10-14). The alpha and beta chains form an alternating ring which encloses part of the gamma chain. F(1) is attached to F(0) by a central stalk formed by the gamma and epsilon chains, while a peripheral stalk is formed by the delta and b chains.

It is found in the cell inner membrane. F(1)F(0) ATP synthase produces ATP from ADP in the presence of a proton or sodium gradient. F-type ATPases consist of two structural domains, F(1) containing the extramembraneous catalytic core and F(0) containing the membrane proton channel, linked together by a central stalk and a peripheral stalk. During catalysis, ATP synthesis in the catalytic domain of F(1) is coupled via a rotary mechanism of the central stalk subunits to proton translocation. Its function is as follows. Component of the F(0) channel, it forms part of the peripheral stalk, linking F(1) to F(0). The chain is ATP synthase subunit b from Helicobacter pylori (strain HPAG1).